Here is a 380-residue protein sequence, read N- to C-terminus: Guanine nucleotide-binding protein subunit beta (380 aa).

7 WD repeats span residues 64 to 94, 106 to 136, 155 to 186, 203 to 234, 247 to 277, 296 to 326, and 342 to 372; these read GHSG…IVWN, LHCP…SIFN, GHKG…VLWD, GHTA…RLWD, GHEG…RLFD, NELP…YVWD, and SHEG…KIWA.

It belongs to the WD repeat G protein beta family. As to quaternary structure, g proteins are composed of 3 units, alpha, beta and gamma. Interacts with the gamma subunits RGG1 and RGG2.

The protein resides in the cell membrane. Its function is as follows. Guanine nucleotide-binding proteins (G proteins) are involved as modulators or transducers in various transmembrane signaling systems. The beta and gamma chains are required for the GTPase activity, for replacement of GDP by GTP, and for G protein-effector interaction. In Oryza sativa subsp. japonica (Rice), this protein is Guanine nucleotide-binding protein subunit beta.